A 137-amino-acid polypeptide reads, in one-letter code: Nucleoside diphosphate kinase (137 aa).

Lys10, Phe58, Arg86, Thr92, Arg103, and Asn113 together coordinate ATP. His116 serves as the catalytic Pros-phosphohistidine intermediate.

It belongs to the NDK family. In terms of assembly, homotetramer. Mg(2+) serves as cofactor.

Its subcellular location is the cytoplasm. It catalyses the reaction a 2'-deoxyribonucleoside 5'-diphosphate + ATP = a 2'-deoxyribonucleoside 5'-triphosphate + ADP. The catalysed reaction is a ribonucleoside 5'-diphosphate + ATP = a ribonucleoside 5'-triphosphate + ADP. Major role in the synthesis of nucleoside triphosphates other than ATP. The ATP gamma phosphate is transferred to the NDP beta phosphate via a ping-pong mechanism, using a phosphorylated active-site intermediate. The chain is Nucleoside diphosphate kinase from Helicobacter pylori (strain P12).